Here is a 317-residue protein sequence, read N- to C-terminus: Aspartate carbamoyltransferase catalytic subunit (317 aa).

Carbamoyl phosphate is bound by residues R65 and T66. K93 contacts L-aspartate. R115, H145, and Q148 together coordinate carbamoyl phosphate. Positions 178 and 233 each coordinate L-aspartate. G274 and P275 together coordinate carbamoyl phosphate.

Belongs to the aspartate/ornithine carbamoyltransferase superfamily. ATCase family. In terms of assembly, heterododecamer (2C3:3R2) of six catalytic PyrB chains organized as two trimers (C3), and six regulatory PyrI chains organized as three dimers (R2).

The catalysed reaction is carbamoyl phosphate + L-aspartate = N-carbamoyl-L-aspartate + phosphate + H(+). It participates in pyrimidine metabolism; UMP biosynthesis via de novo pathway; (S)-dihydroorotate from bicarbonate: step 2/3. Functionally, catalyzes the condensation of carbamoyl phosphate and aspartate to form carbamoyl aspartate and inorganic phosphate, the committed step in the de novo pyrimidine nucleotide biosynthesis pathway. In Methylobacillus flagellatus (strain ATCC 51484 / DSM 6875 / VKM B-1610 / KT), this protein is Aspartate carbamoyltransferase catalytic subunit.